Consider the following 116-residue polypeptide: Large ribosomal subunit protein eL22A (116 aa).

The protein belongs to the eukaryotic ribosomal protein eL22 family.

In Dictyostelium discoideum (Social amoeba), this protein is Large ribosomal subunit protein eL22A (rpl22).